We begin with the raw amino-acid sequence, 426 residues long: CinA-like protein (426 aa).

The protein belongs to the CinA family.

The sequence is that of CinA-like protein from Gloeobacter violaceus (strain ATCC 29082 / PCC 7421).